The following is a 342-amino-acid chain: Paired box protein Pax-9 (342 aa).

The segment at residues 4–130 (AFGEVNQLGG…SSISRILRNK (127 aa)) is a DNA-binding region (paired). A PAI subdomain region spans residues 7 to 63 (EVNQLGGVFVNGRPLPNAIRLRIVELAQLGIRPCDISRQLRVSHGCVSKILARYNET). Residues 82 to 130 (TVVKHIRTYKQRDPGIFAWEIRDRLLADGVCDKYNVPSVSSISRILRNK) are RED subdomain. Residues 168–189 (AAAAKVPTPPGVPAIPGSVALP) form an interaction with KDM5B region.

As to quaternary structure, interacts with KDM5B.

Its subcellular location is the nucleus. Functionally, transcription factor required for normal development of thymus, parathyroid glands, ultimobranchial bodies, teeth, skeletal elements of skull and larynx as well as distal limbs. This chain is Paired box protein Pax-9, found in Rattus norvegicus (Rat).